The sequence spans 145 residues: Cystin-1 (145 aa).

A disordered region spans residues 1–129 (MGSGSSRSGR…PEGQSAISYD (129 aa)). G2 carries the N-myristoyl glycine lipid modification. The Ciliary targeting motif signature appears at 29 to 33 (ASEGG). Position 116 is a phosphoserine (S116).

In terms of assembly, interacts (when myristoylated) with UNC119 and UNC119B; interaction is required for localization to cilium. As to expression, expressed primarily in the kidney and liver. Expressed at lower levels in the lung, brain and heart.

It localises to the cell projection. The protein resides in the cilium membrane. It is found in the cytoplasm. The protein localises to the cytoskeleton. Its subcellular location is the cilium axoneme. The protein is Cystin-1 (Cys1) of Mus musculus (Mouse).